The following is a 196-amino-acid chain: Phosphate-specific transport system accessory protein PhoU homolog (196 aa).

It belongs to the PhoU family. In terms of assembly, homodimer.

It is found in the cytoplasm. In terms of biological role, plays a role in the regulation of phosphate uptake. The polypeptide is Phosphate-specific transport system accessory protein PhoU homolog (Archaeoglobus fulgidus (strain ATCC 49558 / DSM 4304 / JCM 9628 / NBRC 100126 / VC-16)).